Here is a 350-residue protein sequence, read N- to C-terminus: MPVLHNRISNDALKAKMLAESEPRTTISFYKYFHIADPKVTRDALYQLFTALNVFGRVYLAHEGINAQISVPASNVETFRAQLYAFDPALEGLRLNIALDDDGKSFWVLRMKVRDRIVADGIDDPLFDASNVGEYLQAAEVNAMLDDPDALFIDMRNHYEYEVGHFENALEIPADTFREQLPKAVEMMQAHKDKKIVMYCTGGIRCEKASAWMKHNGFNKVWHIEGGIIEYARKAREQGLPVRFIGKNFVFDERMGERISDEIIAHCHQCGAPCDSHTNCKNDGCHLLFIQCPVCAEKYKGCCSEICCEESALPPEEQRRRRAGRENGNKIFNKSRGRLNTTLGIPEPTE.

Residues 146–240 form the Rhodanese domain; the sequence is DDPDALFIDM…YARKAREQGL (95 aa). C200 acts as the Cysteine persulfide intermediate in catalysis.

The protein belongs to the TrhO family.

The enzyme catalyses uridine(34) in tRNA + AH2 + O2 = 5-hydroxyuridine(34) in tRNA + A + H2O. Functionally, catalyzes oxygen-dependent 5-hydroxyuridine (ho5U) modification at position 34 in tRNAs, the first step in 5-carboxymethoxyuridine (cmo5U) biosynthesis. May be part of an alternate pathway, which is able to bypass cmo5U biogenesis in a subset of tRNAs under aerobic conditions. This is tRNA uridine(34) hydroxylase from Escherichia coli O81 (strain ED1a).